Reading from the N-terminus, the 419-residue chain is Serine hydroxymethyltransferase (419 aa).

(6S)-5,6,7,8-tetrahydrofolate is bound by residues L121 and 125 to 127 (GHL). Position 230 is an N6-(pyridoxal phosphate)lysine (K230). Position 354–356 (354–356 (SPF)) interacts with (6S)-5,6,7,8-tetrahydrofolate.

It belongs to the SHMT family. As to quaternary structure, homodimer. Requires pyridoxal 5'-phosphate as cofactor.

The protein resides in the cytoplasm. It carries out the reaction (6R)-5,10-methylene-5,6,7,8-tetrahydrofolate + glycine + H2O = (6S)-5,6,7,8-tetrahydrofolate + L-serine. It functions in the pathway one-carbon metabolism; tetrahydrofolate interconversion. Its pathway is amino-acid biosynthesis; glycine biosynthesis; glycine from L-serine: step 1/1. In terms of biological role, catalyzes the reversible interconversion of serine and glycine with tetrahydrofolate (THF) serving as the one-carbon carrier. This reaction serves as the major source of one-carbon groups required for the biosynthesis of purines, thymidylate, methionine, and other important biomolecules. Also exhibits THF-independent aldolase activity toward beta-hydroxyamino acids, producing glycine and aldehydes, via a retro-aldol mechanism. This Prochlorococcus marinus (strain SARG / CCMP1375 / SS120) protein is Serine hydroxymethyltransferase.